A 79-amino-acid chain; its full sequence is Small ribosomal subunit protein bS16 (79 aa).

This sequence belongs to the bacterial ribosomal protein bS16 family.

The polypeptide is Small ribosomal subunit protein bS16 (Buchnera aphidicola subsp. Acyrthosiphon pisum (strain 5A)).